We begin with the raw amino-acid sequence, 624 residues long: Cilia- and flagella-associated protein 206 (624 aa).

It belongs to the CFAP206 family.

The protein localises to the cytoplasm. It is found in the cytoskeleton. Its subcellular location is the cilium axoneme. It localises to the cilium basal body. In terms of biological role, essential for sperm motility and is involved in the regulation of the beating frequency of motile cilia on the epithelial cells of the respiratory tract. Required for the establishment of radial spokes in sperm flagella. The sequence is that of Cilia- and flagella-associated protein 206 (cfap206) from Danio rerio (Zebrafish).